We begin with the raw amino-acid sequence, 453 residues long: Transmembrane protease serine 3 (453 aa).

Residues 1–48 (MGENDPPAAEAPFSFRSLFGLDDLKISPVAPDGDAVAAQILSLLPLKF) lie on the Cytoplasmic side of the membrane. A helical; Signal-anchor for type II membrane protein transmembrane segment spans residues 49–69 (FPIIVIGIIALILALAIGLGI). Residues 70 to 453 (HFDCSGKYRC…HEQLERDLKT (384 aa)) lie on the Extracellular side of the membrane. The LDL-receptor class A domain maps to 72 to 108 (DCSGKYRCHSSFKCIELTARCDGVSDCKNAEDEYRCV). 10 cysteine pairs are disulfide-bonded: Cys-73/Cys-85, Cys-79/Cys-98, Cys-92/Cys-107, Cys-129/Cys-194, Cys-142/Cys-204, Cys-207/Cys-324, Cys-242/Cys-258, Cys-338/Cys-406, Cys-369/Cys-385, and Cys-396/Cys-424. The SRCR domain maps to 104–205 (EYRCVRVSGQ…SGHVVTLKCS (102 aa)). A Peptidase S1 domain is found at 217–448 (IVGGNMSSLT…FLDWIHEQLE (232 aa)). Asn-221 carries N-linked (GlcNAc...) asparagine glycosylation. Active-site charge relay system residues include His-257 and Asp-304. Residue Ser-400 is the Charge relay system of the active site.

It belongs to the peptidase S1 family. Post-translationally, undergoes autoproteolytic activation. In terms of tissue distribution, strongly expressed in liver, cochlea, brain, cerebellum, spleen, lung, and muscle and at a lower degree in retina, kidney, and heart. Expressed in the spiral ganglion, the cells supporting the organ of Corti and the stria vascularis. Isoform 2 is strongly expressed only in the cochlea with very faint expression in the cerebellum, spleen and muscle.

The protein localises to the endoplasmic reticulum membrane. In terms of biological role, probable serine protease that plays a role in hearing. Acts as a permissive factor for cochlear hair cell survival and activation at the onset of hearing and is required for saccular hair cell survival. Activates ENaC (in vitro). The polypeptide is Transmembrane protease serine 3 (Tmprss3) (Mus musculus (Mouse)).